The following is a 297-amino-acid chain: 4-hydroxy-tetrahydrodipicolinate synthase (297 aa).

Residue threonine 49 coordinates pyruvate. Tyrosine 137 acts as the Proton donor/acceptor in catalysis. Lysine 166 serves as the catalytic Schiff-base intermediate with substrate. Isoleucine 208 is a pyruvate binding site.

It belongs to the DapA family. Homotetramer; dimer of dimers.

It localises to the cytoplasm. The enzyme catalyses L-aspartate 4-semialdehyde + pyruvate = (2S,4S)-4-hydroxy-2,3,4,5-tetrahydrodipicolinate + H2O + H(+). It participates in amino-acid biosynthesis; L-lysine biosynthesis via DAP pathway; (S)-tetrahydrodipicolinate from L-aspartate: step 3/4. Its function is as follows. Catalyzes the condensation of (S)-aspartate-beta-semialdehyde [(S)-ASA] and pyruvate to 4-hydroxy-tetrahydrodipicolinate (HTPA). The chain is 4-hydroxy-tetrahydrodipicolinate synthase from Phocaeicola vulgatus (strain ATCC 8482 / DSM 1447 / JCM 5826 / CCUG 4940 / NBRC 14291 / NCTC 11154) (Bacteroides vulgatus).